Here is a 179-residue protein sequence, read N- to C-terminus: ATP synthase subunit delta (179 aa).

This sequence belongs to the ATPase delta chain family. F-type ATPases have 2 components, F(1) - the catalytic core - and F(0) - the membrane proton channel. F(1) has five subunits: alpha(3), beta(3), gamma(1), delta(1), epsilon(1). F(0) has three main subunits: a(1), b(2) and c(10-14). The alpha and beta chains form an alternating ring which encloses part of the gamma chain. F(1) is attached to F(0) by a central stalk formed by the gamma and epsilon chains, while a peripheral stalk is formed by the delta and b chains.

It is found in the cell membrane. Its function is as follows. F(1)F(0) ATP synthase produces ATP from ADP in the presence of a proton or sodium gradient. F-type ATPases consist of two structural domains, F(1) containing the extramembraneous catalytic core and F(0) containing the membrane proton channel, linked together by a central stalk and a peripheral stalk. During catalysis, ATP synthesis in the catalytic domain of F(1) is coupled via a rotary mechanism of the central stalk subunits to proton translocation. Functionally, this protein is part of the stalk that links CF(0) to CF(1). It either transmits conformational changes from CF(0) to CF(1) or is implicated in proton conduction. The polypeptide is ATP synthase subunit delta (Staphylococcus aureus (strain USA300 / TCH1516)).